The sequence spans 442 residues: Cysteine proteinase 4 (442 aa).

Residues 1–17 (MRVLSFLCLLLVSYASA) form the signal peptide. A propeptide spans 18 to 111 (KQQFSELQYR…TEEEKIFSTP (94 aa)) (activation peptide). 2 cysteine pairs are disulfide-bonded: cysteine 132–cysteine 178 and cysteine 169–cysteine 212. Residue cysteine 135 is part of the active site. Residues asparagine 228 and asparagine 254 are each glycosylated (N-linked (GlcNAc...) asparagine). An intrachain disulfide couples cysteine 270 to cysteine 428. Histidine 277 is a catalytic residue. The interval 286-396 (SGSSSSSGSS…SGSGSGAVEA (111 aa)) is disordered. Over residues 287-376 (GSSSSSGSSS…SASGQASASG (90 aa)) the composition is skewed to low complexity. Positions 377–391 (SGSGSGSGSGSGSGS) are enriched in gly residues. The active site involves asparagine 406.

This sequence belongs to the peptidase C1 family. Glycosylated; contains GlcNAc-alpha-1-P-Ser residues and fucose.

It is found in the lysosome. This is Cysteine proteinase 4 (cprD) from Dictyostelium discoideum (Social amoeba).